Consider the following 345-residue polypeptide: MAWRSGLCETDSRTLKQFLQEECMWKLVGKSRKHREYRAVACRSTIFSPEDDSSCILCQLLLLYRDGEWIICFCCNGRYQGHYGVNHVHRRRRRICHLPTLYQLSFGGPLGPASIDFLPSFSQVTSSMTCDGITPDVIYEVCMLVPQDEAKRILVKGHGAMDLTCQKAVTLGGAGAWLLPRPEGYTLFFYILCYDLFTSCGNRCDIPSMTRLMAAATACGQAGCSFCTDHEGHVDPTGNYVGCTPDMGRCLCYVPCGPMTQSLIHNEEPATFFCESDDAKYLCAVGSKTAAQVTLGDGLDYHIGVKDSEGRWLPVKTDVWDLVKVEEPVSRMIVCSCPVLKNLVH.

A nuclear localization signal 1 region spans residues 26–35; the sequence is KLVGKSRKHR. The nuclear export signal stretch occupies residues 55–63; the sequence is CILCQLLLL. Residues 90–94 form a nuclear localization signal 2 region; that stretch reads RRRRR.

It belongs to the herpesviridae cytoplasmic envelopment protein 2 family. Interacts with cytoplasmic envelopment protein 3 and with the capsid. Interacts with host STING1; this interaction prevents viral DNA-triggered antiviral immune response.

It is found in the virion tegument. Its subcellular location is the host cytoplasm. It localises to the host nucleus. In terms of biological role, plays a critical role in cytoplasmic virus egress. Participates in the final step of tegumentation and envelope acquisition within the host cytoplasm by directly interacting with the capsid. Upon virion binding to target cell, a signaling cascade is triggered to disrupt the interaction with the capsid, thereby preparing capsid uncoating. Additionally, antagonizes the viral DNA-triggered antiviral immune response by targeting host STING1 and preventing its dimerization and trafficking. The protein is Cytoplasmic envelopment protein 2 (UL94) of Human cytomegalovirus (strain AD169) (HHV-5).